The sequence spans 456 residues: Endoglucanase A (456 aa).

An N-terminal signal peptide occupies residues 1-30 (MSRIRRFLATALAAATAGVGAIVTAIASAG). The catalytic stretch occupies residues 31 to 322 (PAHAYDSPFY…RAYELAMNAA (292 aa)). Aspartate 113 is a catalytic residue. 2 cysteine pairs are disulfide-bonded: cysteine 114–cysteine 159 and cysteine 267–cysteine 302. The active-site Proton donor is aspartate 151. The tract at residues 255-280 (SRNGNGPLGSEWCDPPGRATGTWSTT) is disordered. The active-site Nucleophile is the aspartate 300. Positions 321-358 (AAPPTYSPSPTPSTPSPSPSQSDPGSPSPSPSQPPAGR) are disordered. Residues 323-355 (PPTYSPSPTPSTPSPSPSQSDPGSPSPSPSQPP) form a linker ('hinge') (Pro-Ser box) region. Pro residues predominate over residues 325–338 (TYSPSPTPSTPSPS). Positions 353-456 (QPPAGRACEA…LSSSITCSAS (104 aa)) constitute a CBM2 domain. A disulfide bond links cysteine 360 and cysteine 453.

The protein belongs to the glycosyl hydrolase 6 (cellulase B) family.

It catalyses the reaction Endohydrolysis of (1-&gt;4)-beta-D-glucosidic linkages in cellulose, lichenin and cereal beta-D-glucans.. The polypeptide is Endoglucanase A (celA) (Thermobispora bispora (Microbispora bispora)).